The primary structure comprises 291 residues: Nucleotide-binding protein MSMEG_3079/MSMEI_3001 (291 aa).

Residue 14 to 21 (GLSGAGRG) coordinates ATP. 65–68 (DVRS) contributes to the GTP binding site.

It belongs to the RapZ-like family.

Functionally, displays ATPase and GTPase activities. This chain is Nucleotide-binding protein MSMEG_3079/MSMEI_3001, found in Mycolicibacterium smegmatis (strain ATCC 700084 / mc(2)155) (Mycobacterium smegmatis).